A 665-amino-acid chain; its full sequence is Protein phosphatase 1 regulatory subunit 21 (665 aa).

Coiled-coil stretches lie at residues 1–84, 125–206, 426–477, and 586–627; these read MTDL…SESK, LEAQ…RKYQ, ESRE…EAQV, and KRLA…EDQL.

Component of the FERRY complex.

The protein resides in the early endosome. In terms of biological role, component of the FERRY complex (Five-subunit Endosomal Rab5 and RNA/ribosome intermediary). The FERRY complex directly interacts with mRNAs and RAB5A, and functions as a RAB5A effector involved in the localization and the distribution of specific mRNAs most likely by mediating their endosomal transport. The complex recruits mRNAs and ribosomes to early endosomes through direct mRNA-interaction. Putative regulator of protein phosphatase 1 (PP1) activity. May play a role in the endosomal sorting process or in endosome maturation pathway. The sequence is that of Protein phosphatase 1 regulatory subunit 21 (ppp1r21) from Danio rerio (Zebrafish).